Consider the following 195-residue polypeptide: ATP-dependent Clp protease proteolytic subunit (195 aa).

Serine 98 (nucleophile) is an active-site residue. The active site involves histidine 123.

Belongs to the peptidase S14 family. As to quaternary structure, fourteen ClpP subunits assemble into 2 heptameric rings which stack back to back to give a disk-like structure with a central cavity, resembling the structure of eukaryotic proteasomes.

It is found in the cytoplasm. The catalysed reaction is Hydrolysis of proteins to small peptides in the presence of ATP and magnesium. alpha-casein is the usual test substrate. In the absence of ATP, only oligopeptides shorter than five residues are hydrolyzed (such as succinyl-Leu-Tyr-|-NHMec, and Leu-Tyr-Leu-|-Tyr-Trp, in which cleavage of the -Tyr-|-Leu- and -Tyr-|-Trp bonds also occurs).. Its function is as follows. Cleaves peptides in various proteins in a process that requires ATP hydrolysis. Has a chymotrypsin-like activity. Plays a major role in the degradation of misfolded proteins. In Helicobacter pylori (strain G27), this protein is ATP-dependent Clp protease proteolytic subunit.